The chain runs to 201 residues: Large ribosomal subunit protein uL4 (201 aa).

The disordered stretch occupies residues 43 to 73; it reads TRAQKTRSEVSGGGAKPWRQKGTGRARAGTT.

It belongs to the universal ribosomal protein uL4 family. In terms of assembly, part of the 50S ribosomal subunit.

In terms of biological role, one of the primary rRNA binding proteins, this protein initially binds near the 5'-end of the 23S rRNA. It is important during the early stages of 50S assembly. It makes multiple contacts with different domains of the 23S rRNA in the assembled 50S subunit and ribosome. Functionally, forms part of the polypeptide exit tunnel. In Colwellia psychrerythraea (strain 34H / ATCC BAA-681) (Vibrio psychroerythus), this protein is Large ribosomal subunit protein uL4.